The sequence spans 235 residues: Large ribosomal subunit protein uL1 (235 aa).

The disordered stretch occupies residues 1–22 (MSKNSKAYRAAAEKVDRSNPYT).

Belongs to the universal ribosomal protein uL1 family. Part of the 50S ribosomal subunit.

Its function is as follows. Binds directly to 23S rRNA. The L1 stalk is quite mobile in the ribosome, and is involved in E site tRNA release. Protein L1 is also a translational repressor protein, it controls the translation of the L11 operon by binding to its mRNA. This chain is Large ribosomal subunit protein uL1, found in Mycobacterium ulcerans (strain Agy99).